A 278-amino-acid chain; its full sequence is DNA oxidative demethylase ALKBH2 (278 aa).

The tract at residues 1-49 (MDRFLVKGAVGSLKRRMEQEQTGGGPAGLAEEEGNSKKNPRRAAPGNGV) is disordered. A PCNA-binding motif is present at residues 3 to 7 (RFLVK). Substrate-binding positions include 101-103 (FGK) and 121-123 (YTF). A Fe2OG dioxygenase domain is found at 151–256 (TFNFVLINRY…RVNLTFRKIL (106 aa)). N158, Y160, and H170 together coordinate 2-oxoglutarate. Positions 170 and 172 each coordinate Fe cation. D173 is a substrate binding site. H235, R247, T251, and R253 together coordinate 2-oxoglutarate. Fe cation is bound at residue H235.

The protein belongs to the alkB family. Interacts with PCNA homotrimer; this interaction is enhanced during the S-phase of the cell cycle. Interacts with nucleolar proteins NCL, UBTF and NPM1. Interacts with XRCC5-XRCC6 heterodimer. It depends on Fe(2+) as a cofactor.

It is found in the nucleus. Its subcellular location is the nucleolus. The protein resides in the nucleoplasm. It carries out the reaction a methylated nucleobase within DNA + 2-oxoglutarate + O2 = a nucleobase within DNA + formaldehyde + succinate + CO2. The enzyme catalyses an N(1)-methyl-2'-deoxyadenosine in double-stranded DNA + 2-oxoglutarate + O2 = a 2'-deoxyadenosine in double-stranded DNA + formaldehyde + succinate + CO2 + H(+). The catalysed reaction is an N(1)-methyl-2'-deoxyadenosine in single-stranded DNA + 2-oxoglutarate + O2 = a 2'-deoxyadenosine in single-stranded DNA + formaldehyde + succinate + CO2 + H(+). It catalyses the reaction an N(3)-methyl-2'-deoxycytidine in double-stranded DNA + 2-oxoglutarate + O2 = a 2'-deoxycytidine in double-stranded DNA + formaldehyde + succinate + CO2 + H(+). It carries out the reaction an N(3)-methyl-2'-deoxycytidine in single-stranded DNA + 2-oxoglutarate + O2 = a 2'-deoxycytidine in single-stranded DNA + formaldehyde + succinate + CO2 + H(+). The enzyme catalyses a 1,N(6)-etheno-2'-deoxyadenosine in double-stranded DNA + 2-oxoglutarate + O2 + H2O = a 2'-deoxyadenosine in double-stranded DNA + glyoxal + succinate + CO2. The catalysed reaction is a 1,N(6)-etheno-2'-deoxyadenosine in single-stranded DNA + 2-oxoglutarate + O2 + H2O = a 2'-deoxyadenosine in single-stranded DNA + glyoxal + succinate + CO2. It catalyses the reaction a 3,N(4)-etheno-2'-deoxycytidine in double-stranded DNA + 2-oxoglutarate + O2 + H2O = a 2'-deoxycytidine in double-stranded DNA + glyoxal + succinate + CO2. It carries out the reaction a 3,N(4)-etheno-2'-deoxycytidine in single-stranded DNA + 2-oxoglutarate + O2 + H2O = a 2'-deoxycytidine in single-stranded DNA + glyoxal + succinate + CO2. The enzyme catalyses a 1,N(2)-etheno-2'-deoxyguanosine in double-stranded DNA + 2-oxoglutarate + O2 + H2O = a 2'-deoxyguanosine in double-stranded DNA + glyoxal + succinate + CO2. Its activity is regulated as follows. Activated by ascorbate and magnesium ions. Functionally, dioxygenase that repairs alkylated nucleic acid bases by direct reversal oxidative dealkylation. Can process both double-stranded (ds) and single-stranded (ss) DNA substrates, with a strong preference for dsDNA. Uses molecular oxygen, 2-oxoglutarate and iron as cofactors to oxidize the alkyl groups that are subsequently released as aldehydes, regenerating the undamaged bases. Probes the base pair stability, locates a weakened base pair and flips the damaged base to accommodate the lesion in its active site for efficient catalysis. Repairs monoalkylated bases, specifically N1-methyladenine and N3-methylcytosine, as well as higher order alkyl adducts such as bases modified with exocyclic bridged adducts known as etheno adducts including 1,N6-ethenoadenine, 3,N4-ethenocytosine and 1,N2-ethenoguanine. Acts as a gatekeeper of genomic integrity under alkylation stress. Efficiently repairs alkylated lesions in ribosomal DNA (rDNA). These lesions can cause ss- and dsDNA strand breaks that severely impair rDNA transcription. In a response mechanism to DNA damage, associates with PCNA at replication forks to repair alkylated adducts prior to replication. This chain is DNA oxidative demethylase ALKBH2 (ALKBH2), found in Bos taurus (Bovine).